Here is a 205-residue protein sequence, read N- to C-terminus: Small ribosomal subunit protein uS4 (205 aa).

Residues M1–D12 show a composition bias toward basic residues. The segment at M1 to G49 is disordered. Residues R94–A156 form the S4 RNA-binding domain.

Belongs to the universal ribosomal protein uS4 family. Part of the 30S ribosomal subunit. Contacts protein S5. The interaction surface between S4 and S5 is involved in control of translational fidelity.

In terms of biological role, one of the primary rRNA binding proteins, it binds directly to 16S rRNA where it nucleates assembly of the body of the 30S subunit. With S5 and S12 plays an important role in translational accuracy. In Methylobacterium nodulans (strain LMG 21967 / CNCM I-2342 / ORS 2060), this protein is Small ribosomal subunit protein uS4.